Here is a 275-residue protein sequence, read N- to C-terminus: Glutamate racemase (275 aa).

Substrate contacts are provided by residues 12–13 (DS) and 44–45 (YG). The active-site Proton donor/acceptor is the Cys75. Residue 76–77 (NT) coordinates substrate. Cys185 acts as the Proton donor/acceptor in catalysis. 186 to 187 (TH) is a binding site for substrate.

The protein belongs to the aspartate/glutamate racemases family.

The catalysed reaction is L-glutamate = D-glutamate. The protein operates within cell wall biogenesis; peptidoglycan biosynthesis. Its function is as follows. Provides the (R)-glutamate required for cell wall biosynthesis. The chain is Glutamate racemase from Mycobacterium avium (strain 104).